The sequence spans 194 residues: Protein GrpE (194 aa).

A disordered region spans residues 1–40; sequence MSRKHHKEQEEIQEQETISAGAAETPAEETAAIPAATEAD. The segment covering 20-38 has biased composition (low complexity); the sequence is AGAAETPAEETAAIPAATE.

This sequence belongs to the GrpE family. As to quaternary structure, homodimer.

The protein resides in the cytoplasm. Participates actively in the response to hyperosmotic and heat shock by preventing the aggregation of stress-denatured proteins, in association with DnaK and GrpE. It is the nucleotide exchange factor for DnaK and may function as a thermosensor. Unfolded proteins bind initially to DnaJ; upon interaction with the DnaJ-bound protein, DnaK hydrolyzes its bound ATP, resulting in the formation of a stable complex. GrpE releases ADP from DnaK; ATP binding to DnaK triggers the release of the substrate protein, thus completing the reaction cycle. Several rounds of ATP-dependent interactions between DnaJ, DnaK and GrpE are required for fully efficient folding. This is Protein GrpE from Chlorobaculum tepidum (strain ATCC 49652 / DSM 12025 / NBRC 103806 / TLS) (Chlorobium tepidum).